We begin with the raw amino-acid sequence, 442 residues long: Syndecan-3 (442 aa).

2 disordered regions span residues 1-25 (MKPGPPRRGTAQGQRVDTATHAPGA) and 47-80 (RWRNENFERPVDLEGSGDDDSFPDDELDDLYSGS). A signal peptide spans 1–44 (MKPGPPRRGTAQGQRVDTATHAPGARGLLLPPLLLLLLAGRAAG). At 45–387 (AQRWRNENFE…SILERKEVLV (343 aa)) the chain is on the extracellular side. A compositionally biased stretch (basic and acidic residues) spans 48-58 (WRNENFERPVD). Residues 61 to 75 (GSGDDDSFPDDELDD) are compositionally biased toward acidic residues. O-linked (Xyl...) (glycosaminoglycan) serine glycosylation is found at S78, S80, S82, and S89. A glycan (O-linked (GalNAc) threonine; by GALNT13) is linked at T107. Disordered stretches follow at residues 152–199 (ESSQ…PATA), 253–293 (ATSR…AQTP), and 305–327 (EPEVPVSGGPSGDFELQEETTQP). 2 stretches are compositionally biased toward low complexity: residues 157–199 (ATTI…PATA) and 276–287 (TLPLGTTAPGPT). O-linked (GalNAc) serine; by GALNT13 glycosylation is present at S161. T162, T163, T170, and T172 each carry an O-linked (GalNAc) threonine; by GALNT13 glycan. S315 and S367 each carry an O-linked (Xyl...) (glycosaminoglycan) serine glycan. Residues 388 to 408 (AVIVGGVVGALFAAFLVTLLI) traverse the membrane as a helical segment. Y409, Y419, Y431, and Y441 each carry phosphotyrosine. Residues 409 to 442 (YRMKKKDEGSYTLEEPKQASVTYQKPDKQEEFYA) are Cytoplasmic-facing. Residues 419–442 (YTLEEPKQASVTYQKPDKQEEFYA) form a disordered region. Positions 433–442 (KPDKQEEFYA) are enriched in basic and acidic residues.

This sequence belongs to the syndecan proteoglycan family. Interacts with TIAM1. Interacts with PTN (via heparan sulfate chains); this interaction mediates the neurite outgrowth-promoting signal from PTN to the cytoskeleton of growing neurites; this interaction mediates osteoblast recruitment. Interacts with MDK; this interaction induces SDC3 clustering; this interaction induces neuronal cell adhesion and neurite outgrowth. In terms of processing, O-glycosylated within the Thr/Ser-rich region which could interact with lectin domains on other molecules.

The protein resides in the cell membrane. In terms of biological role, cell surface proteoglycan that may bear heparan sulfate. May have a role in the organization of cell shape by affecting the actin cytoskeleton, possibly by transferring signals from the cell surface in a sugar-dependent mechanism. This chain is Syndecan-3 (Sdc3), found in Mus musculus (Mouse).